A 389-amino-acid chain; its full sequence is S-adenosylmethionine synthase (389 aa).

Histidine 17 is an ATP binding site. Aspartate 19 contributes to the Mg(2+) binding site. Glutamate 45 contributes to the K(+) binding site. L-methionine-binding residues include glutamate 58 and glutamine 101. Positions 101–111 are flexible loop; that stretch reads QSPDISQGVDG. Residues 170-172, 237-238, aspartate 246, 252-253, alanine 269, and lysine 273 each bind ATP; these read DSK, RF, and RK. Position 246 (aspartate 246) interacts with L-methionine. Lysine 277 provides a ligand contact to L-methionine.

The protein belongs to the AdoMet synthase family. In terms of assembly, homotetramer; dimer of dimers. Mg(2+) is required as a cofactor. Requires K(+) as cofactor.

The protein resides in the cytoplasm. It catalyses the reaction L-methionine + ATP + H2O = S-adenosyl-L-methionine + phosphate + diphosphate. Its pathway is amino-acid biosynthesis; S-adenosyl-L-methionine biosynthesis; S-adenosyl-L-methionine from L-methionine: step 1/1. In terms of biological role, catalyzes the formation of S-adenosylmethionine (AdoMet) from methionine and ATP. The overall synthetic reaction is composed of two sequential steps, AdoMet formation and the subsequent tripolyphosphate hydrolysis which occurs prior to release of AdoMet from the enzyme. This is S-adenosylmethionine synthase from Treponema denticola (strain ATCC 35405 / DSM 14222 / CIP 103919 / JCM 8153 / KCTC 15104).